Here is a 212-residue protein sequence, read N- to C-terminus: MQILLAALVAYLIGSVSFAVVVSGAMGLADPRSYGSKNPGATNVLRSGNKKAAILTLVGDAFKGWIAVWLARHLGLPDVAVAWVAIAVFLGHLYPVFFRFQGGKGVATAAGVLLAVHPVLGLATALTWLIVAFFFRYSSLAALVAAVFAPVFDVFLFGTGHNPVAWAVLAMSVLLVWRHRGNISKLLAGQESRIGDKKKAAADGGAQDGGKA.

A run of 4 helical transmembrane segments spans residues Ile3–Ser23, Asp78–Phe98, Ala115–Phe135, and Phe155–Trp177.

This sequence belongs to the PlsY family. Probably interacts with PlsX.

It is found in the cell inner membrane. It carries out the reaction an acyl phosphate + sn-glycerol 3-phosphate = a 1-acyl-sn-glycero-3-phosphate + phosphate. Its pathway is lipid metabolism; phospholipid metabolism. Functionally, catalyzes the transfer of an acyl group from acyl-phosphate (acyl-PO(4)) to glycerol-3-phosphate (G3P) to form lysophosphatidic acid (LPA). This enzyme utilizes acyl-phosphate as fatty acyl donor, but not acyl-CoA or acyl-ACP. This chain is Glycerol-3-phosphate acyltransferase, found in Burkholderia lata (strain ATCC 17760 / DSM 23089 / LMG 22485 / NCIMB 9086 / R18194 / 383).